We begin with the raw amino-acid sequence, 731 residues long: Cell death abnormality protein 12 (731 aa).

The ELMO domain occupies 339–485 (AEVQKILDIE…VVLEQLRHVL (147 aa)). Positions 544–679 (VRINHLNYLK…WLEGLAELIG (136 aa)) constitute a PH domain. Residues 715–718 (PEIP) carry the SH3-binding motif.

As to quaternary structure, interacts with psr-1. Forms a ternary complex with ced-2 and ced-5.

Its subcellular location is the cytoplasm. Functionally, involved in programmed apoptosis and necrosis. Required for the cell corpse engulfment process. Has roles in the formation of actin halos and distal tip cell migration. Negatively regulates the unc-6/Netrin receptor unc-5 to control distal tip cell migration along the anterior-posterior axis of the body. Plays no role in amphid axon outgrowth. The polypeptide is Cell death abnormality protein 12 (Caenorhabditis elegans).